Reading from the N-terminus, the 414-residue chain is Gamma-glutamyl phosphate reductase (414 aa).

It belongs to the gamma-glutamyl phosphate reductase family.

It is found in the cytoplasm. It carries out the reaction L-glutamate 5-semialdehyde + phosphate + NADP(+) = L-glutamyl 5-phosphate + NADPH + H(+). It participates in amino-acid biosynthesis; L-proline biosynthesis; L-glutamate 5-semialdehyde from L-glutamate: step 2/2. In terms of biological role, catalyzes the NADPH-dependent reduction of L-glutamate 5-phosphate into L-glutamate 5-semialdehyde and phosphate. The product spontaneously undergoes cyclization to form 1-pyrroline-5-carboxylate. This chain is Gamma-glutamyl phosphate reductase, found in Caldanaerobacter subterraneus subsp. tengcongensis (strain DSM 15242 / JCM 11007 / NBRC 100824 / MB4) (Thermoanaerobacter tengcongensis).